Reading from the N-terminus, the 450-residue chain is Bifunctional apoptosis regulator (450 aa).

Residues Met-1–Leu-20 are disordered. The Cytoplasmic portion of the chain corresponds to Met-1 to Met-140. The RING-type zinc-finger motif lies at Cys-34–Arg-74. A helical membrane pass occupies residues Gly-141–Val-161. The Lumenal portion of the chain corresponds to Tyr-162–Glu-331. One can recognise an SAM domain in the interval Trp-182–Leu-249. Asn-232 carries an N-linked (GlcNAc...) asparagine glycan. Residues Phe-332–Leu-352 traverse the membrane as a helical segment. Residues Glu-353–Arg-360 lie on the Cytoplasmic side of the membrane. A helical membrane pass occupies residues Phe-361–Trp-381. Over Ser-382–Gly-404 the chain is Lumenal. A helical transmembrane segment spans residues Leu-405 to Trp-425. Topologically, residues Ala-426–Leu-450 are cytoplasmic.

In terms of assembly, interacts with CASP8, BCL2 and BCL2L1 through SAM domain and also with HIP1, IFT57, ESRRBL1 and BCAP31. Interacts with NGFR; this interaction inhibits NF-kappa-B and JNK-related signaling pathways. In terms of processing, mediates RING-dependent self-ubiquitination leading to proteasomal degradation. In terms of tissue distribution, expressed highly in brain, moderately in small intestine, weakly in testes and only faintly in liver and skeletal muscle. Not expressed in heart, kidney, lung and spleen.

The protein localises to the endoplasmic reticulum membrane. The enzyme catalyses S-ubiquitinyl-[E2 ubiquitin-conjugating enzyme]-L-cysteine + [acceptor protein]-L-lysine = [E2 ubiquitin-conjugating enzyme]-L-cysteine + N(6)-ubiquitinyl-[acceptor protein]-L-lysine.. Functionally, membrane-bound E3 ubiquitin ligase that plays a role in several processes including apoptosis regulation or reticulum endoplasmic stress. Has anti-apoptotic activity, both for apoptosis triggered via death-receptors and via mitochondrial factors. Contributes to the dynamic control of IRE1/ERN1 signaling during ER stress by inducing BAX inhibitor 1/TMBIM6 proteasomal degradation. Promotes the activation of TGF-beta signaling by mediating the 'Lys-63'-linked ubiquitination of TGFBR1 which is critical to activate the pathway. Together with NGFR, negatively regulates NF-kappa-B and JNK-related signaling pathways. Promotes the proteasome-mediated degradation of PNPLA3, a protein involveld in lipid metabolism. This chain is Bifunctional apoptosis regulator (BFAR), found in Homo sapiens (Human).